The chain runs to 174 residues: Protein-export protein SecB (174 aa).

This sequence belongs to the SecB family. Homotetramer, a dimer of dimers. One homotetramer interacts with 1 SecA dimer.

It localises to the cytoplasm. Functionally, one of the proteins required for the normal export of preproteins out of the cell cytoplasm. It is a molecular chaperone that binds to a subset of precursor proteins, maintaining them in a translocation-competent state. It also specifically binds to its receptor SecA. The sequence is that of Protein-export protein SecB from Ehrlichia ruminantium (strain Gardel).